The sequence spans 319 residues: Acetyl-coenzyme A carboxylase carboxyl transferase subunit alpha (319 aa).

The region spanning 32-293 is the CoA carboxyltransferase C-terminal domain; the sequence is NVDTEVRALE…KAVLLNELEA (262 aa).

This sequence belongs to the AccA family. Acetyl-CoA carboxylase is a heterohexamer composed of biotin carboxyl carrier protein (AccB), biotin carboxylase (AccC) and two subunits each of ACCase subunit alpha (AccA) and ACCase subunit beta (AccD).

The protein resides in the cytoplasm. The catalysed reaction is N(6)-carboxybiotinyl-L-lysyl-[protein] + acetyl-CoA = N(6)-biotinyl-L-lysyl-[protein] + malonyl-CoA. Its pathway is lipid metabolism; malonyl-CoA biosynthesis; malonyl-CoA from acetyl-CoA: step 1/1. Its function is as follows. Component of the acetyl coenzyme A carboxylase (ACC) complex. First, biotin carboxylase catalyzes the carboxylation of biotin on its carrier protein (BCCP) and then the CO(2) group is transferred by the carboxyltransferase to acetyl-CoA to form malonyl-CoA. The protein is Acetyl-coenzyme A carboxylase carboxyl transferase subunit alpha of Xylella fastidiosa (strain 9a5c).